Here is a 428-residue protein sequence, read N- to C-terminus: tRNA modification GTPase MnmE (428 aa).

3 residues coordinate (6S)-5-formyl-5,6,7,8-tetrahydrofolate: arginine 20, glutamate 77, and lysine 117. The TrmE-type G domain maps to 213-351 (GFEIALVGAP…LLEKIRSVFS (139 aa)). Asparagine 223 contacts K(+). GTP is bound by residues 223 to 228 (NAGKST), 242 to 248 (SEIAGTT), and 267 to 270 (DTAG). Position 227 (serine 227) interacts with Mg(2+). K(+)-binding residues include serine 242, isoleucine 244, and threonine 247. Threonine 248 is a Mg(2+) binding site. Lysine 428 contacts (6S)-5-formyl-5,6,7,8-tetrahydrofolate.

The protein belongs to the TRAFAC class TrmE-Era-EngA-EngB-Septin-like GTPase superfamily. TrmE GTPase family. In terms of assembly, homodimer. Heterotetramer of two MnmE and two MnmG subunits. It depends on K(+) as a cofactor.

Its subcellular location is the cytoplasm. In terms of biological role, exhibits a very high intrinsic GTPase hydrolysis rate. Involved in the addition of a carboxymethylaminomethyl (cmnm) group at the wobble position (U34) of certain tRNAs, forming tRNA-cmnm(5)s(2)U34. This Roseobacter denitrificans (strain ATCC 33942 / OCh 114) (Erythrobacter sp. (strain OCh 114)) protein is tRNA modification GTPase MnmE.